The primary structure comprises 272 residues: Sulfate transporter CysZ (272 aa).

4 helical membrane passes run 29–49, 66–86, 148–168, and 219–239; these read FVIIPILLNTILLCGLFWLFI, WLSFLSVILLTLSILTILLLF, IIALFLLSFIPLVGQTIVPVL, and FVPVINLLIMPVAVCGATLMW.

This sequence belongs to the CysZ family.

Its subcellular location is the cell inner membrane. High affinity, high specificity proton-dependent sulfate transporter, which mediates sulfate uptake. Provides the sulfur source for the cysteine synthesis pathway. This chain is Sulfate transporter CysZ, found in Haemophilus influenzae (strain 86-028NP).